Consider the following 639-residue polypeptide: Wall-associated receptor kinase-like 15 (639 aa).

An N-terminal signal peptide occupies residues 1-25 (MELPWLSLTTFTLSLLIYFSSTTQA). Over 26 to 282 (FKRCPNCGST…KRKSCKRWSN (257 aa)) the chain is Extracellular. Asn-68, Asn-115, Asn-126, Asn-141, and Asn-241 each carry an N-linked (GlcNAc...) asparagine glycan. Residues 283–303 (LPLLGGLAGGVGAILIAGFIT) traverse the membrane as a helical segment. The Cytoplasmic portion of the chain corresponds to 304–639 (KTIVSKQNRR…KEIENILHGI (336 aa)). The Protein kinase domain occupies 354–639 (FAKSNLLGFG…KEIENILHGI (286 aa)). Residues 360 to 368 (LGFGGFGEV) and Lys-382 each bind ATP. Asp-484 (proton acceptor) is an active-site residue.

Belongs to the protein kinase superfamily. Ser/Thr protein kinase family.

Its subcellular location is the membrane. The catalysed reaction is L-seryl-[protein] + ATP = O-phospho-L-seryl-[protein] + ADP + H(+). It catalyses the reaction L-threonyl-[protein] + ATP = O-phospho-L-threonyl-[protein] + ADP + H(+). Its function is as follows. Putative serine/threonine-protein kinase that may function as a signaling receptor of extracellular matrix component. In Arabidopsis thaliana (Mouse-ear cress), this protein is Wall-associated receptor kinase-like 15 (WAKL15).